Here is a 3124-residue protein sequence, read N- to C-terminus: Collagen alpha-1(XII) chain (3124 aa).

The first 23 residues, 1-23 (MRTALCSAVAALCAAALLSSIEA), serve as a signal peptide directing secretion. The 91-residue stretch at 27 to 117 (PPSDLNFTII…GQLTIQTGGP (91 aa)) folds into the Fibronectin type-III 1 domain. An N-linked (GlcNAc...) asparagine glycan is attached at asparagine 32. Positions 139 to 311 (DLVFLVDGSW…DGIVDIQNEI (173 aa)) constitute a VWFA 1 domain. Serine 328 carries O-linked (Xyl...) (chondroitin sulfate) serine glycosylation. The region spanning 335–424 (PASNLVATQI…ITIMEKTQQV (90 aa)) is the Fibronectin type-III 2 domain. In terms of domain architecture, VWFA 2 spans 439–615 (DVVFLVDGSY…RISFELTQSV (177 aa)). 6 consecutive Fibronectin type-III domains span residues 633–722 (PAKN…LEVK), 724–815 (APRN…VRGN), 816–906 (PRNL…LEER), 908–998 (SPRN…VSQS), 999–1087 (ARTV…ASPF), and 1089–1179 (PPRN…TLSD). Serine 797, serine 890, and serine 981 each carry an O-linked (Xyl...) (chondroitin sulfate) serine glycan. N-linked (GlcNAc...) asparagine glycosylation is found at asparagine 1006, asparagine 1032, and asparagine 1044. The segment at 1075–1100 (KSRKAEGTTASPFKPPRNLRTSDSTM) is disordered. In terms of domain architecture, VWFA 3 spans 1199–1371 (DIVLLVDGSW…SFLASIGEDV (173 aa)). 10 Fibronectin type-III domains span residues 1387-1476 (PPSN…YPLS), 1477-1568 (SVRN…LPLP), 1569-1659 (GPRG…VPSP), 1660-1756 (VNLR…TPAP), 1759-1853 (GPRN…TVKN), 1854-1939 (MLVY…LERG), 1940-2030 (TPRN…LPRS), 2031-2121 (GPRN…VGLL), 2122-2210 (PPQN…LYLN), and 2211-2299 (VTDL…LKPT). Asparagine 1512 carries N-linked (GlcNAc...) asparagine glycosylation. The N-linked (GlcNAc...) asparagine glycan is linked to asparagine 1767. Asparagine 2210 and asparagine 2273 each carry an N-linked (GlcNAc...) asparagine glycan. One can recognise a VWFA 4 domain in the interval 2327–2500 (DIVFLTDASW…DAFEKIQDNL (174 aa)). Residues 2455–2750 (SGFSVFVVGV…NACTCTQDSV (296 aa)) form a nonhelical region (NC3) region. The Laminin G-like domain maps to 2524–2716 (GFKMLESYNL…IQNFDIVCSP (193 aa)). 2 N-linked (GlcNAc...) asparagine glycosylation sites follow: asparagine 2532 and asparagine 2683. Disordered stretches follow at residues 2749-2900 (SVGP…GDRG) and 2935-3080 (PNDY…EGEP). Collagen-like domains are found at residues 2751-2802 (GPPG…GPNG), 2807-2858 (GEPG…GPRG), and 2859-2900 (PPGP…GDRG). The segment at 2751–2902 (GPPGPPGPPG…KGEKGDRGDI (152 aa)) is triple-helical region (COL2) with 1 imperfection. Pro residues-rich tracts occupy residues 2752 to 2761 (PPGPPGPPGG) and 2788 to 2798 (PPGPQGPPGPQ). Residues 2821 to 2830 (PGLPGRSGTP) are compositionally biased toward low complexity. A compositionally biased stretch (pro residues) spans 2832 to 2841 (LPGPPGPVGP). 2 stretches are compositionally biased toward low complexity: residues 2842-2854 (PGERGFTGKDGPT) and 2865-2878 (APGVPGVAGPSGKP). The short motif at 2899–2901 (RGD) is the Cell attachment site element. A nonhelical region (NC2) region spans residues 2903–2945 (ASQNMMRAVARQVCEQLINGQMSRFNQMLNQIPNDYYSNRNQP). Over residues 2935–2944 (PNDYYSNRNQ) the composition is skewed to polar residues. Pro residues predominate over residues 2945-2954 (PGPPGPPGPP). A Collagen-like 4 domain is found at 2945–2994 (PGPPGPPGPPGAAGTRGEPGPGGRPGFPGPPGVQGPPGERGMPGEKGERG). Positions 2946-3048 (GPPGPPGPPG…RGPPGPPGYC (103 aa)) are triple-helical region (COL1) with 2 imperfections. Residues 2961–2970 (GEPGPGGRPG) show a composition bias toward gly residues. Residues 3010–3024 (QGESRTGPPGSTGSR) are compositionally biased toward low complexity. Residues 3049–3124 (DSSQCASIPY…SLSRKAKRKP (76 aa)) form a nonhelical region (NC1) region.

The protein belongs to the fibril-associated collagens with interrupted helices (FACIT) family. Trimer of identical chains each containing 190 kDa of non-triple-helical sequences. Post-translationally, the triple-helical tail is stabilized by disulfide bonds at each end. In terms of processing, prolines at the third position of the tripeptide repeating unit (G-X-Y) are hydroxylated in some or all of the chains. O-glycosylated; glycosaminoglycan of chondroitin-sulfate type. As to expression, type XII collagen is present in tendons, ligaments, perichondrium, and periosteum, all dense connective tissues containing type I collagen.

Its subcellular location is the secreted. It is found in the extracellular space. The protein localises to the extracellular matrix. Its function is as follows. Type XII collagen interacts with type I collagen-containing fibrils, the COL1 domain could be associated with the surface of the fibrils, and the COL2 and NC3 domains may be localized in the perifibrillar matrix. The sequence is that of Collagen alpha-1(XII) chain (COL12A1) from Gallus gallus (Chicken).